A 362-amino-acid polypeptide reads, in one-letter code: UDP-N-acetylglucosamine--N-acetylmuramyl-(pentapeptide) pyrophosphoryl-undecaprenol N-acetylglucosamine transferase (362 aa).

Residues 15–17, N127, R165, S191, I247, 266–271, and Q292 each bind UDP-N-acetyl-alpha-D-glucosamine; these read TGG and ALTVSE.

This sequence belongs to the glycosyltransferase 28 family. MurG subfamily.

It is found in the cell inner membrane. It catalyses the reaction di-trans,octa-cis-undecaprenyl diphospho-N-acetyl-alpha-D-muramoyl-L-alanyl-D-glutamyl-meso-2,6-diaminopimeloyl-D-alanyl-D-alanine + UDP-N-acetyl-alpha-D-glucosamine = di-trans,octa-cis-undecaprenyl diphospho-[N-acetyl-alpha-D-glucosaminyl-(1-&gt;4)]-N-acetyl-alpha-D-muramoyl-L-alanyl-D-glutamyl-meso-2,6-diaminopimeloyl-D-alanyl-D-alanine + UDP + H(+). Its pathway is cell wall biogenesis; peptidoglycan biosynthesis. In terms of biological role, cell wall formation. Catalyzes the transfer of a GlcNAc subunit on undecaprenyl-pyrophosphoryl-MurNAc-pentapeptide (lipid intermediate I) to form undecaprenyl-pyrophosphoryl-MurNAc-(pentapeptide)GlcNAc (lipid intermediate II). This is UDP-N-acetylglucosamine--N-acetylmuramyl-(pentapeptide) pyrophosphoryl-undecaprenol N-acetylglucosamine transferase from Shewanella oneidensis (strain ATCC 700550 / JCM 31522 / CIP 106686 / LMG 19005 / NCIMB 14063 / MR-1).